Reading from the N-terminus, the 1052-residue chain is uncharacterized protein (1052 aa).

The region spanning 389–561 (WINKGKTFAI…NKGGNYIMIN (173 aa)) is the Helicase ATP-binding domain. Residue 400–407 (SAMGTGKT) coordinates ATP.

The protein belongs to the mimivirus R1 family.

This is an uncharacterized protein from Acanthamoeba polyphaga mimivirus (APMV).